Consider the following 83-residue polypeptide: Kunitz-type serine protease inhibitor 161 (83 aa).

Residues 1 to 24 (MSSGGLLLLLGLLTLWAELTPVSS) form the signal peptide. One can recognise a BPTI/Kunitz inhibitor domain in the interval 31-81 (CHLPADSGSCKGNFQAFYYHPVHRTCLEFIYGGCEGNANNFKTMDECKRTC). 3 disulfide bridges follow: cysteine 31/cysteine 81, cysteine 40/cysteine 64, and cysteine 56/cysteine 77.

Belongs to the venom Kunitz-type family. In terms of tissue distribution, expressed by the venom gland.

The protein resides in the secreted. Serine protease inhibitor. The polypeptide is Kunitz-type serine protease inhibitor 161 (Drysdalia coronoides (White-lipped snake)).